The sequence spans 202 residues: ATP-dependent Clp protease proteolytic subunit (202 aa).

Ser101 functions as the Nucleophile in the catalytic mechanism. Residue His126 is part of the active site.

Belongs to the peptidase S14 family. As to quaternary structure, component of the chloroplastic Clp protease core complex.

Its subcellular location is the plastid. It localises to the chloroplast stroma. It carries out the reaction Hydrolysis of proteins to small peptides in the presence of ATP and magnesium. alpha-casein is the usual test substrate. In the absence of ATP, only oligopeptides shorter than five residues are hydrolyzed (such as succinyl-Leu-Tyr-|-NHMec, and Leu-Tyr-Leu-|-Tyr-Trp, in which cleavage of the -Tyr-|-Leu- and -Tyr-|-Trp bonds also occurs).. Cleaves peptides in various proteins in a process that requires ATP hydrolysis. Has a chymotrypsin-like activity. Plays a major role in the degradation of misfolded proteins. The protein is ATP-dependent Clp protease proteolytic subunit of Platanus occidentalis (Sycamore).